Consider the following 267-residue polypeptide: 4-hydroxy-tetrahydrodipicolinate reductase (267 aa).

NAD(+)-binding positions include 8-13 (GAAGRM) and D34. R35 lines the NADP(+) pocket. NAD(+)-binding positions include 98-100 (GTT) and 122-125 (AANF). The active-site Proton donor/acceptor is the H155. (S)-2,3,4,5-tetrahydrodipicolinate is bound at residue H156. The active-site Proton donor is the K159. 165-166 (GT) is a binding site for (S)-2,3,4,5-tetrahydrodipicolinate.

Belongs to the DapB family.

It is found in the cytoplasm. It carries out the reaction (S)-2,3,4,5-tetrahydrodipicolinate + NAD(+) + H2O = (2S,4S)-4-hydroxy-2,3,4,5-tetrahydrodipicolinate + NADH + H(+). It catalyses the reaction (S)-2,3,4,5-tetrahydrodipicolinate + NADP(+) + H2O = (2S,4S)-4-hydroxy-2,3,4,5-tetrahydrodipicolinate + NADPH + H(+). Its pathway is amino-acid biosynthesis; L-lysine biosynthesis via DAP pathway; (S)-tetrahydrodipicolinate from L-aspartate: step 4/4. Catalyzes the conversion of 4-hydroxy-tetrahydrodipicolinate (HTPA) to tetrahydrodipicolinate. The polypeptide is 4-hydroxy-tetrahydrodipicolinate reductase (Pseudomonas putida (strain ATCC 700007 / DSM 6899 / JCM 31910 / BCRC 17059 / LMG 24140 / F1)).